The chain runs to 151 residues: 3-hydroxyacyl-[acyl-carrier-protein] dehydratase FabZ (151 aa).

H52 is an active-site residue.

The protein belongs to the thioester dehydratase family. FabZ subfamily.

The protein resides in the cytoplasm. The enzyme catalyses a (3R)-hydroxyacyl-[ACP] = a (2E)-enoyl-[ACP] + H2O. Involved in unsaturated fatty acids biosynthesis. Catalyzes the dehydration of short chain beta-hydroxyacyl-ACPs and long chain saturated and unsaturated beta-hydroxyacyl-ACPs. The protein is 3-hydroxyacyl-[acyl-carrier-protein] dehydratase FabZ (fabZ1) of Lactococcus lactis subsp. lactis (strain IL1403) (Streptococcus lactis).